Reading from the N-terminus, the 98-residue chain is UPF0390 protein zgc136864 (98 aa).

Residues 1–30 (MAQGKQKFKAQRPGGAKKHQNKPKGLKKGG) show a composition bias toward basic residues. 2 disordered regions span residues 1–38 (MAQG…PKKA) and 63–98 (TQKA…GPSK). Low complexity predominate over residues 83–98 (KSGTAGAPKPAAGPSK).

The protein belongs to the UPF0390 family.

The sequence is that of UPF0390 protein zgc136864 from Danio rerio (Zebrafish).